A 472-amino-acid chain; its full sequence is Adenosylhomocysteinase (472 aa).

Residues Thr-61, Asp-136, and Glu-196 each contribute to the substrate site. Residue Thr-197–Thr-199 coordinates NAD(+). Substrate is bound by residues Lys-226 and Asp-230. NAD(+) is bound by residues Asn-231, Gly-260–Gly-265, Glu-283, Asn-318, Ile-339–His-341, and Asn-384.

It belongs to the adenosylhomocysteinase family. The cofactor is NAD(+).

The protein resides in the cytoplasm. The enzyme catalyses S-adenosyl-L-homocysteine + H2O = L-homocysteine + adenosine. It participates in amino-acid biosynthesis; L-homocysteine biosynthesis; L-homocysteine from S-adenosyl-L-homocysteine: step 1/1. Functionally, may play a key role in the regulation of the intracellular concentration of adenosylhomocysteine. This is Adenosylhomocysteinase from Cupriavidus pinatubonensis (strain JMP 134 / LMG 1197) (Cupriavidus necator (strain JMP 134)).